The primary structure comprises 820 residues: Cell division control protein 48 homolog C (820 aa).

Disordered regions lie at residues 72-157 (RVKD…RFDL) and 169-188 (LNSS…VEVE). Acidic residues predominate over residues 76–87 (EDEDDNIGDEEG). Residues 85–122 (EEGSASQRKKQRRVDEKEEKLQRAEQSHLRKRNMERSV) are a coiled coil. Basic and acidic residues predominate over residues 97–119 (RVDEKEEKLQRAEQSHLRKRNME). Positions 121–142 (SVSSSPSSSSSSEDSGDVSTSE) are enriched in low complexity. Residues 274–281 (GPPGCGKT) and 569–576 (GPPGCGKT) each bind ATP.

The protein belongs to the AAA ATPase family.

The protein resides in the nucleus. It is found in the cytoplasm. It localises to the cytoskeleton. Its subcellular location is the phragmoplast. Probably functions in cell division and growth processes. Interacts with certain SNAREs as part of specialized membrane fusion events where vesicles from the same organelle fuse (homotypic fusion). This Arabidopsis thaliana (Mouse-ear cress) protein is Cell division control protein 48 homolog C (CDC48C).